A 445-amino-acid chain; its full sequence is MLRKGCCVELLLLLLAGELPLGGGCPRDCVCYPAPMTVSCQAHNFAAIPEGIPEDSERIFLQNNRITFLQQGHFSPAMVTLWIYSNNITFIAPNTFEGFVHLEELDLGDNRQLRTLAPETFQGLVKLHALYLYKCGLSALPAGIFGGLHSLQYLYLQDNHIEYLQDDIFVDLVNLSHLFLHGNKLWSLGQGIFRGLVNLDRLLLHENQLQWVHHKAFHDLHRLTTLFLFNNSLTELQGDCLAPLVALEFLRLNGNAWDCGCRARSLWEWLRRFRGSSSAVPCATPELRQGQDLKLLRVEDFRNCTGPVSPHQIKSHTLTTSDRAARKEHHPSHGASRDKGHPHGHPPGSRSGYKKAGKNCTSHRNRNQISKVSSGKELTELQDYAPDYQHKFSFDIMPTARPKRKGKCARRTPIRAPSGVQQASSGTALGAPLLAWILGLAVTLR.

Residues Met-1–Gly-24 form the signal peptide. The LRRNT domain occupies Cys-25 to Glu-54. LRR repeat units lie at residues Asp-55–Pro-76, Ala-77–Gly-98, His-101–Gly-123, Lys-126–Gly-147, Ser-150–Asp-171, Asn-174–Gly-195, Asn-198–Asp-219, and Arg-222–Pro-243. One can recognise an LRRCT domain in the interval Asn-255–Gly-306. Disordered regions lie at residues Pro-307–Glu-377 and Arg-401–Ser-424. Basic residues-rich tracts occupy residues Gly-352 to Arg-366 and Arg-401 to Pro-413. Ser-424 carries GPI-anchor amidated serine lipidation. A helical membrane pass occupies residues Ser-424 to Leu-444. The propeptide at Ser-425 to Arg-445 is removed in mature form.

Belongs to the Nogo receptor family. In terms of assembly, identified in a complex that contains RTN4R, RTN4RL1 and NGFR; the interaction depends on the presence of chondroitin sulfate proteoglycans. Does not interact with MAG, OMG and RTN4. As to expression, detected in brain (at protein level). Detected in retina ganglion cell layer and inner nuclear layer.

The protein resides in the cell membrane. Its subcellular location is the membrane raft. It is found in the perikaryon. The protein localises to the cell projection. Its function is as follows. Cell surface receptor that plays a functionally redundant role in postnatal brain development and in regulating axon regeneration in the adult central nervous system. Contributes to normal axon migration across the brain midline and normal formation of the corpus callosum. Protects motoneurons against apoptosis; protection against apoptosis is probably mediated by MAG. Plays a role in inhibiting neurite outgrowth and axon regeneration via its binding to neuronal chondroitin sulfate proteoglycans. Binds heparin. Like other family members, plays a role in restricting the number dendritic spines and the number of synapses that are formed during brain development. Signaling mediates activation of Rho and downstream reorganization of the actin cytoskeleton. The sequence is that of Reticulon-4 receptor-like 1 from Mus musculus (Mouse).